We begin with the raw amino-acid sequence, 611 residues long: mRNA export factor GLE1 (611 aa).

Disordered regions lie at residues 69-94 (SEDEMESDEGEESDDEEEEEDHSQIC) and 220-243 (KIRSEEAQEEARRKERAHQEEKIR). Residues 71-89 (DEMESDEGEESDDEEEEED) are compositionally biased toward acidic residues.

Belongs to the GLE1 family. Part of the nuclear pore complex (NPC). The NPC has an eight-fold symmetrical structure comprising a central transport channel and two rings, the cytoplasmic and nuclear rings, to which eight filaments are attached. The cytoplasmic filaments have loose ends, while the nuclear filaments are joined in a distal ring, forming a nuclear basket. NPCs are highly dynamic in configuration and composition, and can be devided in 3 subcomplexes, the NUP62 subcomplex, the NUP107-160 subcomplex and the NUP93 subcomplex, containing approximately 30 different nucleoporin proteins.

It localises to the nucleus envelope. The protein resides in the nucleus. Its subcellular location is the nuclear pore complex. Required for seed viability. This Arabidopsis thaliana (Mouse-ear cress) protein is mRNA export factor GLE1.